The sequence spans 273 residues: Putative pyruvate, phosphate dikinase regulatory protein (273 aa).

153-160 is an ADP binding site; the sequence is GVSRTSKS.

It belongs to the pyruvate, phosphate/water dikinase regulatory protein family. PDRP subfamily.

The catalysed reaction is N(tele)-phospho-L-histidyl/L-threonyl-[pyruvate, phosphate dikinase] + ADP = N(tele)-phospho-L-histidyl/O-phospho-L-threonyl-[pyruvate, phosphate dikinase] + AMP + H(+). It carries out the reaction N(tele)-phospho-L-histidyl/O-phospho-L-threonyl-[pyruvate, phosphate dikinase] + phosphate + H(+) = N(tele)-phospho-L-histidyl/L-threonyl-[pyruvate, phosphate dikinase] + diphosphate. Bifunctional serine/threonine kinase and phosphorylase involved in the regulation of the pyruvate, phosphate dikinase (PPDK) by catalyzing its phosphorylation/dephosphorylation. This Ehrlichia chaffeensis (strain ATCC CRL-10679 / Arkansas) protein is Putative pyruvate, phosphate dikinase regulatory protein.